The chain runs to 468 residues: Dihydrolipoyl dehydrogenase (468 aa).

FAD contacts are provided by residues 39–47, Lys-56, and Ala-119; that span reads EKGNLGGVC. A disulfide bond links Cys-47 and Cys-52. NAD(+) is bound by residues 183–187, Glu-206, and 271–274; these read GGGYI and TVGR. The FAD site is built by Asp-314 and Ala-322. Residue His-446 is the Proton acceptor of the active site.

The protein belongs to the class-I pyridine nucleotide-disulfide oxidoreductase family. In terms of assembly, homodimer. Requires FAD as cofactor.

Its subcellular location is the cytoplasm. It localises to the membrane. The enzyme catalyses N(6)-[(R)-dihydrolipoyl]-L-lysyl-[protein] + NAD(+) = N(6)-[(R)-lipoyl]-L-lysyl-[protein] + NADH + H(+). Functionally, lipoamide dehydrogenase is a component of the alpha-ketoacid dehydrogenase complexes. The sequence is that of Dihydrolipoyl dehydrogenase (pdhD) from Staphylococcus aureus (strain COL).